Consider the following 86-residue polypeptide: Exodeoxyribonuclease 7 small subunit (86 aa).

The tract at residues 1–26 (MQDELFETEKAPQKNTKNAKNAPKKS) is disordered.

The protein belongs to the XseB family. Heterooligomer composed of large and small subunits.

The protein resides in the cytoplasm. It catalyses the reaction Exonucleolytic cleavage in either 5'- to 3'- or 3'- to 5'-direction to yield nucleoside 5'-phosphates.. Functionally, bidirectionally degrades single-stranded DNA into large acid-insoluble oligonucleotides, which are then degraded further into small acid-soluble oligonucleotides. The chain is Exodeoxyribonuclease 7 small subunit from Helicobacter pylori (strain HPAG1).